The chain runs to 383 residues: Chitinase-3-like protein 1 (383 aa).

Positions 1–21 (MGLRVAQTGFVALVLLQSCAA) are cleaved as a signal peptide. In terms of domain architecture, GH18 spans 22–383 (YKLVCYYTSW…SAIKDVLAAA (362 aa)). The cysteines at positions 26 and 51 are disulfide-linked. N-linked (GlcNAc...) asparagine glycosylation occurs at Asn-60. Residues 70-71 (EW), 97-100 (GGWN), Tyr-141, 204-207 (LTYD), and Arg-263 each bind chitin. Cys-300 and Cys-364 are joined by a disulfide. The tract at residues 324-338 (QWVGYDDQESVKNKA) is important for AKT1 activation and IL8 production. Trp-352 is a chitin binding site.

It belongs to the glycosyl hydrolase 18 family. In terms of assembly, monomer. As to expression, detected in smooth muscle cells in atherosclerotic plaques. Detected in regions of vascular occlusion in the aorta.

It localises to the secreted. It is found in the extracellular space. The protein resides in the cytoplasm. The protein localises to the perinuclear region. Its subcellular location is the endoplasmic reticulum. In terms of biological role, carbohydrate-binding lectin with a preference for chitin. Has no chitinase activity. May play a role in tissue remodeling and in the capacity of cells to respond to and cope with changes in their environment. Plays a role in T-helper cell type 2 (Th2) inflammatory response and IL-13-induced inflammation, regulating allergen sensitization, inflammatory cell apoptosis, dendritic cell accumulation and M2 macrophage differentiation. Facilitates invasion of pathogenic enteric bacteria into colonic mucosa and lymphoid organs. Mediates activation of AKT1 signaling pathway and subsequent IL8 production in colonic epithelial cells. Regulates antibacterial responses in lung by contributing to macrophage bacterial killing, controlling bacterial dissemination and augmenting host tolerance. Also regulates hyperoxia-induced injury, inflammation and epithelial apoptosis in lung. Stimulates migration and adhesion of cultured vascular smooth muscle cells. The chain is Chitinase-3-like protein 1 (CHI3L1) from Sus scrofa (Pig).